A 706-amino-acid chain; its full sequence is MGKEALLNLYRIEYRPKDTTFTVFKPTHEIQKEKLNKVRWRVFLQTGLPTFRREDEFWCAGKVEKDTLYLTLSNGEIVELKRVGEEEFRGFQNERECQELFRDFLTKTKVKDKFISDFYKKFRDKITVQGKNRKIALIPEVNEKVLKSEEGYFLLHLDLKFRIQPFETLQTLLERNDFNPKRIRVKPIGIDFVGRVQDVFKAKEKGEEFFRLCMERSTHKSSKKAWEELLKNRELREKAFLVVLEKGYTYPATILKPVLTYENLEDEERNEVADIVRMEPGKRLNLIRYILRRYVKALRDYGWYISPEEERAKGKLNFKDTVLDAKGKNTKVITNLRKFLELCRPFVKKDVLSVEIISVSVYKKLEWRKEEFLKELINFLKNKGIKLKIKGKSLILAQTREEAKEKLIPVINKIKDVDLVIVFLEEYPKVDPYKSFLLYDFVKRELLKKMIPSQVILNRTLKNENLKFVLLNVAEQVLAKTGNIPYKLKEIEGKVDAFVGIDISRITRDGKTVNAVAFTKIFNSKGELVRYYLTSYPAFGEKLTEKAIGDVFSLLEKLGFKKGSKIVVHRDGRLYRDEVAAFKKYGELYGYSLELLEIIKRNNPRFFSNEKFIKGYFYKLSEDSVILATYNQVYEGTHQPIKVRKVYGELPVEVLCSQILSLTLMNYSSFQPIKLPATVHYSDKITKLMLRGIEPIKKEGDIMYWL.

Residues 1-108 (MGKEALLNLY…ELFRDFLTKT (108 aa)) are N-terminal domain. The interval 109-165 (KVKDKFISDFYKKFRDKITVQGKNRKIALIPEVNEKVLKSEEGYFLLHLDLKFRIQP) is linker L1. In terms of domain architecture, PAZ spans 168–259 (TLQTLLERND…YPATILKPVL (92 aa)). Residues 263-334 (NLEDEERNEV…AKGKNTKVIT (72 aa)) are linker L2. A mid domain region spans residues 335-448 (NLRKFLELCR…YDFVKRELLK (114 aa)). Residues 419–694 (LVIVFLEEYP…ITKLMLRGIE (276 aa)) form the Piwi domain. The PIWI domain stretch occupies residues 449–706 (KMIPSQVILN…KKEGDIMYWL (258 aa)). Catalysis depends on residues D502, E541, and D571. Residue D502 coordinates Mn(2+). Residue D571 participates in Mn(2+) binding. The interval 612–650 (FIKGYFYKLSEDSVILATYNQVYEGTHQPIKVRKVYGEL) is PIWI box. D683 is an active-site residue. D683 is a Mn(2+) binding site.

It belongs to the argonaute family. Long pAgo subfamily. It depends on Mg(2+) as a cofactor.

In terms of biological role, a DNA-guided RNA endonuclease. Uses short ssDNA sequences as guides (gDNA) to bind complementary target strands, resulting in cleavage of the target RNA. The cleavage site is 10 nucleotides downstream of the residue base paired with the 5'-end of the gDNA. Binds ssDNA better than ssRNA, binds dsDNA and DNA-RNA hybrids but does not bind dsRNA. A 2 nucleotide 3'-overhang (possibly on the guide strand) may help load nucleic acids into the complex. The polypeptide is Protein argonaute (Aquifex aeolicus (strain VF5)).